Here is a 231-residue protein sequence, read N- to C-terminus: Ribonuclease 3 (231 aa).

Residues 7–135 (IQAIESKLNF…ILGAVYLDGG (129 aa)) enclose the RNase III domain. Glutamate 48 contacts Mg(2+). Aspartate 52 is a catalytic residue. The Mg(2+) site is built by asparagine 121 and glutamate 124. The active site involves glutamate 124. The DRBM domain maps to 160–229 (NPKNRLQQFT…AKQALSTHDN (70 aa)).

This sequence belongs to the ribonuclease III family. Homodimer. It depends on Mg(2+) as a cofactor.

It localises to the cytoplasm. It catalyses the reaction Endonucleolytic cleavage to 5'-phosphomonoester.. Digests double-stranded RNA. Involved in the processing of primary rRNA transcript to yield the immediate precursors to the large and small rRNAs (23S and 16S). Processes some mRNAs, and tRNAs when they are encoded in the rRNA operon. Processes pre-crRNA and tracrRNA of type II CRISPR loci if present in the organism. The polypeptide is Ribonuclease 3 (Chlamydia trachomatis serovar L2 (strain ATCC VR-902B / DSM 19102 / 434/Bu)).